Consider the following 380-residue polypeptide: 4-hydroxy-3-methylbut-2-en-1-yl diphosphate synthase (flavodoxin) (380 aa).

The [4Fe-4S] cluster site is built by cysteine 275, cysteine 278, cysteine 310, and glutamate 317.

It belongs to the IspG family. [4Fe-4S] cluster serves as cofactor.

It carries out the reaction (2E)-4-hydroxy-3-methylbut-2-enyl diphosphate + oxidized [flavodoxin] + H2O + 2 H(+) = 2-C-methyl-D-erythritol 2,4-cyclic diphosphate + reduced [flavodoxin]. It functions in the pathway isoprenoid biosynthesis; isopentenyl diphosphate biosynthesis via DXP pathway; isopentenyl diphosphate from 1-deoxy-D-xylulose 5-phosphate: step 5/6. In terms of biological role, converts 2C-methyl-D-erythritol 2,4-cyclodiphosphate (ME-2,4cPP) into 1-hydroxy-2-methyl-2-(E)-butenyl 4-diphosphate. The protein is 4-hydroxy-3-methylbut-2-en-1-yl diphosphate synthase (flavodoxin) of Hyphomonas neptunium (strain ATCC 15444).